The chain runs to 128 residues: Glycine cleavage system H protein (128 aa).

A Lipoyl-binding domain is found at 25–107; that stretch reads TITVGITHHA…YGAGWFFKLK (83 aa). Position 66 is an N6-lipoyllysine (Lys66).

Belongs to the GcvH family. As to quaternary structure, the glycine cleavage system is composed of four proteins: P, T, L and H. Requires (R)-lipoate as cofactor.

In terms of biological role, the glycine cleavage system catalyzes the degradation of glycine. The H protein shuttles the methylamine group of glycine from the P protein to the T protein. This Neisseria meningitidis serogroup B (strain ATCC BAA-335 / MC58) protein is Glycine cleavage system H protein.